A 355-amino-acid chain; its full sequence is Methylthioribose-1-phosphate isomerase (355 aa).

Residues 50–52 (RGA), Arg93, and Gln198 each bind substrate. Asp239 (proton donor) is an active-site residue. Substrate is bound at residue 249-250 (NK).

It belongs to the eIF-2B alpha/beta/delta subunits family. MtnA subfamily. As to quaternary structure, homodimer.

The enzyme catalyses 5-(methylsulfanyl)-alpha-D-ribose 1-phosphate = 5-(methylsulfanyl)-D-ribulose 1-phosphate. Its pathway is amino-acid biosynthesis; L-methionine biosynthesis via salvage pathway; L-methionine from S-methyl-5-thio-alpha-D-ribose 1-phosphate: step 1/6. In terms of biological role, catalyzes the interconversion of methylthioribose-1-phosphate (MTR-1-P) into methylthioribulose-1-phosphate (MTRu-1-P). This is Methylthioribose-1-phosphate isomerase from Geobacillus thermodenitrificans (strain NG80-2).